The sequence spans 138 residues: Cysteine desulfuration protein SufE (138 aa).

Cys51 serves as the catalytic Cysteine persulfide intermediate.

Belongs to the SufE family. Homodimer. Interacts with SufS.

The protein localises to the cytoplasm. It participates in cofactor biosynthesis; iron-sulfur cluster biosynthesis. In terms of biological role, participates in cysteine desulfuration mediated by SufS. Cysteine desulfuration mobilizes sulfur from L-cysteine to yield L-alanine and constitutes an essential step in sulfur metabolism for biosynthesis of a variety of sulfur-containing biomolecules. Functions as a sulfur acceptor for SufS, by mediating the direct transfer of the sulfur atom from the S-sulfanylcysteine of SufS, an intermediate product of cysteine desulfuration process. The polypeptide is Cysteine desulfuration protein SufE (Escherichia coli O8 (strain IAI1)).